Reading from the N-terminus, the 405-residue chain is L-rhamnonate dehydratase (405 aa).

Residues H33 and R59 each contribute to the substrate site. Positions 226, 252, and 280 each coordinate Mg(2+). H329 functions as the Proton acceptor in the catalytic mechanism. E349 contributes to the substrate binding site.

Belongs to the mandelate racemase/muconate lactonizing enzyme family. RhamD subfamily. Homooctamer; tetramer of dimers. Requires Mg(2+) as cofactor.

It carries out the reaction L-rhamnonate = 2-dehydro-3-deoxy-L-rhamnonate + H2O. Its function is as follows. Catalyzes the dehydration of L-rhamnonate to 2-keto-3-deoxy-L-rhamnonate (KDR). In Escherichia coli O127:H6 (strain E2348/69 / EPEC), this protein is L-rhamnonate dehydratase.